We begin with the raw amino-acid sequence, 390 residues long: Succinate--CoA ligase [ADP-forming] subunit beta (390 aa).

Residues 9 to 248 (KEILRRHKAN…ITEEDPLEVQ (240 aa)) form the ATP-grasp domain. ATP contacts are provided by residues K50, 57–59 (GRG), E103, I106, and E111. Residues N203 and D217 each contribute to the Mg(2+) site. Substrate is bound by residues N268 and 325 to 327 (GIV).

It belongs to the succinate/malate CoA ligase beta subunit family. In terms of assembly, heterotetramer of two alpha and two beta subunits. Mg(2+) is required as a cofactor.

The enzyme catalyses succinate + ATP + CoA = succinyl-CoA + ADP + phosphate. It carries out the reaction GTP + succinate + CoA = succinyl-CoA + GDP + phosphate. It participates in carbohydrate metabolism; tricarboxylic acid cycle; succinate from succinyl-CoA (ligase route): step 1/1. Its function is as follows. Succinyl-CoA synthetase functions in the citric acid cycle (TCA), coupling the hydrolysis of succinyl-CoA to the synthesis of either ATP or GTP and thus represents the only step of substrate-level phosphorylation in the TCA. The beta subunit provides nucleotide specificity of the enzyme and binds the substrate succinate, while the binding sites for coenzyme A and phosphate are found in the alpha subunit. The sequence is that of Succinate--CoA ligase [ADP-forming] subunit beta from Leptospira interrogans serogroup Icterohaemorrhagiae serovar copenhageni (strain Fiocruz L1-130).